The sequence spans 350 residues: Cytosolic sulfotransferase 18 (350 aa).

Position 1 is an N-acetylmethionine (M1). Low complexity predominate over residues 1-17 (MESETLTAKATITTTTL). The interval 1 to 28 (MESETLTAKATITTTTLPSHDETKTEST) is disordered. Residues 19–28 (SHDETKTEST) show a composition bias toward basic and acidic residues. 93–98 (KTGTTW) serves as a coordination point for 3'-phosphoadenylyl sulfate. The active-site Proton acceptor is the H155. Residues R177, S185, Y243, and 313-315 (RKG) each bind 3'-phosphoadenylyl sulfate.

It belongs to the sulfotransferase 1 family. As to expression, expressed in roots, leaves and stems. Barely detected in siliques and flowers.

The protein resides in the cytoplasm. It catalyses the reaction an aliphatic (Z)-desulfo-glucosinolate + 3'-phosphoadenylyl sulfate = a (Z)-omega-(methylsulfanyl)-N-sulfo-alkylhydroximate S-glucoside + adenosine 3',5'-bisphosphate + H(+). With respect to regulation, inhibited by phosphoadenosine 5'-phosphate (PAP). Its function is as follows. Sulfotransferase that utilizes 3'-phospho-5'-adenylyl sulfate (PAPS) as sulfonate donor to catalyze the sulfate conjugation of desulfo-glucosinolates (dsGSs), the final step in the biosynthesis of the glucosinolate core structure. Preferred substrate are the long-chain desulfo-glucosinolates, 7-methylthioheptyl and 8-methylthiooctyl, derived from methionine. Substrate preference is desulfo-benzyl glucosinolate &gt; desulfo-4-methylthiobutyl glucosinolate &gt; desulfo-6-methylthiohexyl glucosinolate &gt; desulfo-3-methylthiopropyl glucosinolate &gt; desulfo-indol-3-yl methyl glucosinolate &gt; desulfo-singrin &gt; desulfo-3-butenyl glucosinolate. The sequence is that of Cytosolic sulfotransferase 18 (SOT18) from Arabidopsis thaliana (Mouse-ear cress).